Consider the following 360-residue polypeptide: Peptide chain release factor 1 (360 aa).

An N5-methylglutamine modification is found at Gln237.

Belongs to the prokaryotic/mitochondrial release factor family. In terms of processing, methylated by PrmC. Methylation increases the termination efficiency of RF1.

The protein resides in the cytoplasm. Its function is as follows. Peptide chain release factor 1 directs the termination of translation in response to the peptide chain termination codons UAG and UAA. The protein is Peptide chain release factor 1 of Pseudomonas putida (strain ATCC 47054 / DSM 6125 / CFBP 8728 / NCIMB 11950 / KT2440).